The sequence spans 116 residues: Large ribosomal subunit protein uL18 (116 aa).

The protein belongs to the universal ribosomal protein uL18 family. In terms of assembly, part of the 50S ribosomal subunit; part of the 5S rRNA/L5/L18/L25 subcomplex. Contacts the 5S and 23S rRNAs.

This is one of the proteins that bind and probably mediate the attachment of the 5S RNA into the large ribosomal subunit, where it forms part of the central protuberance. This is Large ribosomal subunit protein uL18 from Azotobacter vinelandii (strain DJ / ATCC BAA-1303).